The primary structure comprises 274 residues: Acyl-[acyl-carrier-protein]--UDP-N-acetylglucosamine O-acyltransferase (274 aa).

Belongs to the transferase hexapeptide repeat family. LpxA subfamily. In terms of assembly, homotrimer.

It localises to the cytoplasm. It catalyses the reaction a (3R)-hydroxyacyl-[ACP] + UDP-N-acetyl-alpha-D-glucosamine = a UDP-3-O-[(3R)-3-hydroxyacyl]-N-acetyl-alpha-D-glucosamine + holo-[ACP]. Its pathway is glycolipid biosynthesis; lipid IV(A) biosynthesis; lipid IV(A) from (3R)-3-hydroxytetradecanoyl-[acyl-carrier-protein] and UDP-N-acetyl-alpha-D-glucosamine: step 1/6. Involved in the biosynthesis of lipid A, a phosphorylated glycolipid that anchors the lipopolysaccharide to the outer membrane of the cell. The sequence is that of Acyl-[acyl-carrier-protein]--UDP-N-acetylglucosamine O-acyltransferase from Bartonella henselae (strain ATCC 49882 / DSM 28221 / CCUG 30454 / Houston 1) (Rochalimaea henselae).